A 601-amino-acid chain; its full sequence is Putative helicase 7 (601 aa).

One can recognise a Helicase ATP-binding domain in the interval 17-182; sequence QSFLMSDKNL…IIDAEIIKTD (166 aa). 30 to 37 is a binding site for ATP; the sequence is APTGTGKS. The DEAH box signature appears at 129 to 132; that stretch reads DEIH. In terms of domain architecture, Helicase C-terminal spans 208–375; that stretch reads LKEDFIKKMV…VLEDFLLALI (168 aa).

This Saccharolobus islandicus (Sulfolobus islandicus) protein is Putative helicase 7 (SIFV0007).